We begin with the raw amino-acid sequence, 98 residues long: MTLIHFSFCSAFILGLTGLALNRSPILSILLCLEGMLLMSMDGIVLTPLHLTIYLSSMMLYIMLPFAAPEAATGLSLNSDHYTTHGTDKLFSLNLLEC.

2 consecutive transmembrane segments (helical) span residues 1–21 (MTLI…GLAL) and 48–68 (PLHL…PFAA).

Belongs to the complex I subunit 4L family. As to quaternary structure, core subunit of respiratory chain NADH dehydrogenase (Complex I) which is composed of 45 different subunits.

It localises to the mitochondrion inner membrane. It catalyses the reaction a ubiquinone + NADH + 5 H(+)(in) = a ubiquinol + NAD(+) + 4 H(+)(out). In terms of biological role, core subunit of the mitochondrial membrane respiratory chain NADH dehydrogenase (Complex I) which catalyzes electron transfer from NADH through the respiratory chain, using ubiquinone as an electron acceptor. Part of the enzyme membrane arm which is embedded in the lipid bilayer and involved in proton translocation. The sequence is that of NADH-ubiquinone oxidoreductase chain 4L (mt-nd4l) from Xenopus laevis (African clawed frog).